The primary structure comprises 527 residues: Rhamnogalacturonate lyase A (527 aa).

Residues 1 to 20 (MLSKTFLLSSAVLWARVANA) form the signal peptide. N-linked (GlcNAc...) asparagine glycans are attached at residues N27 and N46. Cystine bridges form between C50–C93 and C184–C193. N-linked (GlcNAc...) asparagine glycosylation is present at N351.

The protein belongs to the polysaccharide lyase 4 family.

It is found in the secreted. It carries out the reaction Endotype eliminative cleavage of L-alpha-rhamnopyranosyl-(1-&gt;4)-alpha-D-galactopyranosyluronic acid bonds of rhamnogalacturonan I domains in ramified hairy regions of pectin leaving L-rhamnopyranose at the reducing end and 4-deoxy-4,5-unsaturated D-galactopyranosyluronic acid at the non-reducing end.. Functionally, pectinolytic enzymes consist of four classes of enzymes: pectin lyase, polygalacturonase, pectin methylesterase and rhamnogalacturonase. Degrades the rhamnogalacturonan I (RG-I) backbone of pectin. Active against linseed rhamnogalacturonan. This is Rhamnogalacturonate lyase A (rglA) from Emericella nidulans (strain FGSC A4 / ATCC 38163 / CBS 112.46 / NRRL 194 / M139) (Aspergillus nidulans).